A 521-amino-acid polypeptide reads, in one-letter code: GMP synthase [glutamine-hydrolyzing] (521 aa).

In terms of domain architecture, Glutamine amidotransferase type-1 spans 8–203 (KILILDFGAQ…VVDVCGCQTL (196 aa)). Residue Cys85 is the Nucleophile of the active site. Active-site residues include His177 and Glu179. Residues 204–396 (WTAANIIDDQ…LGLPRTMVYR (193 aa)) enclose the GMPS ATP-PPase domain. 231-237 (SGGVDSS) contributes to the ATP binding site.

In terms of assembly, homodimer.

The catalysed reaction is XMP + L-glutamine + ATP + H2O = GMP + L-glutamate + AMP + diphosphate + 2 H(+). It participates in purine metabolism; GMP biosynthesis; GMP from XMP (L-Gln route): step 1/1. Functionally, catalyzes the synthesis of GMP from XMP. This Xanthomonas campestris pv. campestris (strain B100) protein is GMP synthase [glutamine-hydrolyzing].